The sequence spans 286 residues: Pantothenate synthetase (286 aa).

An ATP-binding site is contributed by 30 to 37; the sequence is MGCFHQGH. Residue His37 is the Proton donor of the active site. Gln61 is a binding site for (R)-pantoate. A beta-alanine-binding site is contributed by Gln61. ATP is bound at residue 147–150; the sequence is GEKD. Residue Gln153 participates in (R)-pantoate binding. Position 184–187 (184–187) interacts with ATP; sequence MSSR.

Belongs to the pantothenate synthetase family. As to quaternary structure, homodimer.

It localises to the cytoplasm. It carries out the reaction (R)-pantoate + beta-alanine + ATP = (R)-pantothenate + AMP + diphosphate + H(+). The protein operates within cofactor biosynthesis; (R)-pantothenate biosynthesis; (R)-pantothenate from (R)-pantoate and beta-alanine: step 1/1. Its function is as follows. Catalyzes the condensation of pantoate with beta-alanine in an ATP-dependent reaction via a pantoyl-adenylate intermediate. This chain is Pantothenate synthetase, found in Desulfotalea psychrophila (strain LSv54 / DSM 12343).